The primary structure comprises 243 residues: Ubiquinone/menaquinone biosynthesis C-methyltransferase UbiE (243 aa).

S-adenosyl-L-methionine-binding positions include Thr69, Asp90, and 116–117 (DA).

The protein belongs to the class I-like SAM-binding methyltransferase superfamily. MenG/UbiE family.

It catalyses the reaction a 2-demethylmenaquinol + S-adenosyl-L-methionine = a menaquinol + S-adenosyl-L-homocysteine + H(+). The catalysed reaction is a 2-methoxy-6-(all-trans-polyprenyl)benzene-1,4-diol + S-adenosyl-L-methionine = a 5-methoxy-2-methyl-3-(all-trans-polyprenyl)benzene-1,4-diol + S-adenosyl-L-homocysteine + H(+). Its pathway is quinol/quinone metabolism; menaquinone biosynthesis; menaquinol from 1,4-dihydroxy-2-naphthoate: step 2/2. It participates in cofactor biosynthesis; ubiquinone biosynthesis. Its function is as follows. Methyltransferase required for the conversion of demethylmenaquinol (DMKH2) to menaquinol (MKH2) and the conversion of 2-polyprenyl-6-methoxy-1,4-benzoquinol (DDMQH2) to 2-polyprenyl-3-methyl-6-methoxy-1,4-benzoquinol (DMQH2). This is Ubiquinone/menaquinone biosynthesis C-methyltransferase UbiE from Paraburkholderia xenovorans (strain LB400).